Here is a 496-residue protein sequence, read N- to C-terminus: Amidophosphoribosyltransferase (496 aa).

The propeptide occupies 1–21 (MNQSHSFPTDDPLDGDTLHEE). Cys-22 serves as the catalytic Nucleophile. A Glutamine amidotransferase type-2 domain is found at 22-241 (CGVFGILGHP…NGEVIICEIQ (220 aa)).

The protein in the C-terminal section; belongs to the purine/pyrimidine phosphoribosyltransferase family.

It catalyses the reaction 5-phospho-beta-D-ribosylamine + L-glutamate + diphosphate = 5-phospho-alpha-D-ribose 1-diphosphate + L-glutamine + H2O. It functions in the pathway purine metabolism; IMP biosynthesis via de novo pathway; N(1)-(5-phospho-D-ribosyl)glycinamide from 5-phospho-alpha-D-ribose 1-diphosphate: step 1/2. Its function is as follows. Catalyzes the formation of phosphoribosylamine from phosphoribosylpyrophosphate (PRPP) and glutamine. This Rhizobium etli (strain ATCC 51251 / DSM 11541 / JCM 21823 / NBRC 15573 / CFN 42) protein is Amidophosphoribosyltransferase.